The chain runs to 173 residues: Large ribosomal subunit protein uL10 (173 aa).

This sequence belongs to the universal ribosomal protein uL10 family. As to quaternary structure, part of the ribosomal stalk of the 50S ribosomal subunit. The N-terminus interacts with L11 and the large rRNA to form the base of the stalk. The C-terminus forms an elongated spine to which L12 dimers bind in a sequential fashion forming a multimeric L10(L12)X complex.

In terms of biological role, forms part of the ribosomal stalk, playing a central role in the interaction of the ribosome with GTP-bound translation factors. The protein is Large ribosomal subunit protein uL10 of Bifidobacterium animalis subsp. lactis (strain AD011).